Reading from the N-terminus, the 96-residue chain is Large ribosomal subunit protein bL27 (96 aa).

Residues H12–A33 are disordered. A compositionally biased stretch (low complexity) spans A19–R28.

It belongs to the bacterial ribosomal protein bL27 family.

This is Large ribosomal subunit protein bL27 from Lactobacillus helveticus (strain DPC 4571).